The following is a 40-amino-acid chain: DAEFRHESGYEVHHQKLVFFAEDVGSNKGAIIGLMVGGVV.

Belongs to the APP family. In terms of assembly, binds, via its C-terminus, to the PID domain of several cytoplasmic proteins, including APBB family members, the APBA family, MAPK8IP1, SHC1 and NUMB and DAB1. Binding to DAB1 inhibits its serine phosphorylation. Interacts (via NPXY motif) with DAB2 (via PID domain); the interaction is impaired by tyrosine phosphorylation of the NPXY motif. Also interacts with GPCR-like protein BPP, APPBP1, IB1, KNS2 (via its TPR domains), APPBP2 (via BaSS) and DDB1. In vitro, it binds MAPT via the MT-binding domains. Associates with microtubules in the presence of ATP and in a kinesin-dependent manner. Interacts, through a C-terminal domain, with GNAO1. Interacts with CPEB1, ANKS1B and AGER. Interacts with ITM2B. Interacts with ITM2C. Interacts with IDE. Can form homodimers; dimerization is enhanced in the presence of Cu(2+) ions. Can form homodimers; this is promoted by heparin binding. Interacts with SORL1 (via N-terminal ectodomain); this interaction retains APP in the trans-Golgi network and reduces processing into soluble APP-alpha and amyloid-beta peptides. Interacts with PLD3. Interacts with VDAC1. Interacts with NSG1; could regulate APP processing. Interacts with LRRK2. Interacts (via cytoplasmic domain) with KIF5B. Interacts (via C-terminus) with APBB2/FE65L1 (via C-terminus). Interacts (via intracellular domain) with APBB3. Post-translationally, proteolytically processed under normal cellular conditions. Cleavage either by alpha-secretase, beta-secretase or theta-secretase leads to generation and extracellular release of soluble APP peptides, S-APP-alpha and S-APP-beta, and the retention of corresponding membrane-anchored C-terminal fragments, C80, C83 and C99. Subsequent processing of C80 and C83 by gamma-secretase yields P3 peptides. This is the major secretory pathway and is non-amyloidogenic. Alternatively, presenilin/nicastrin-mediated gamma-secretase processing of C99 releases the amyloid-beta proteins, amyloid-beta protein 40 and amyloid-beta protein 42, major components of amyloid plaques, and the cytotoxic C-terminal fragments, gamma-CTF(50), gamma-CTF(57) and gamma-CTF(59). PSEN1 cleavage is more efficient with C83 than with C99 as substrate (in vitro). Amyloid-beta protein 40 and Amyloid-beta protein 42 are cleaved by ACE. Many other minor amyloid-beta peptides, amyloid-beta 1-X peptides, are found in cerebral spinal fluid (CSF) including the amyloid-beta X-15 peptides, produced from the cleavage by alpha-secretase.

The protein resides in the cell membrane. It localises to the membrane. The protein localises to the perikaryon. It is found in the cell projection. Its subcellular location is the growth cone. The protein resides in the clathrin-coated pit. It localises to the early endosome. The protein localises to the cytoplasmic vesicle. Its function is as follows. Functions as a cell surface receptor and performs physiological functions on the surface of neurons relevant to neurite growth, neuronal adhesion and axonogenesis. Interaction between APP molecules on neighboring cells promotes synaptogenesis. Involved in cell mobility and transcription regulation through protein-protein interactions. Can promote transcription activation through binding to APBB1-KAT5 and inhibit Notch signaling through interaction with Numb. Couples to apoptosis-inducing pathways such as those mediated by G(o) and JIP. Inhibits G(o)-alpha ATPase activity. Acts as a kinesin I membrane receptor, mediating the axonal transport of beta-secretase and presenilin 1. May be involved in copper homeostasis/oxidative stress through copper ion reduction. In vitro, copper-metallated APP induces neuronal death directly or is potentiated through Cu(2+)-mediated low-density lipoprotein oxidation. Can regulate neurite outgrowth through binding to components of the extracellular matrix such as heparin and collagen I and IV. Induces a AGER-dependent pathway that involves activation of p38 MAPK, resulting in internalization of amyloid-beta peptide and mitochondrial dysfunction in cultured cortical neurons. Provides Cu(2+) ions for GPC1 which are required for release of nitric oxide (NO) and subsequent degradation of the heparan sulfate chains on GPC1. The sequence is that of Amyloid-beta precursor protein from Felis catus (Cat).